We begin with the raw amino-acid sequence, 89 residues long: MAKKSKIAKAKRQEKLVQQYAVKRAALKAKGDYIGLSKLPRDSSPVRLHHRDVLDGRPHAYMRKFGMSRLNFRELAHKGQIPGVRKASW.

The protein belongs to the universal ribosomal protein uS14 family. Part of the 30S ribosomal subunit. Contacts proteins S3 and S10.

Binds 16S rRNA, required for the assembly of 30S particles and may also be responsible for determining the conformation of the 16S rRNA at the A site. The sequence is that of Small ribosomal subunit protein uS14A from Lacticaseibacillus paracasei (strain ATCC 334 / BCRC 17002 / CCUG 31169 / CIP 107868 / KCTC 3260 / NRRL B-441) (Lactobacillus paracasei).